The chain runs to 200 residues: Phycocyanobilin lyase subunit beta (200 aa).

This sequence belongs to the CpcE/RpcE/PecE family. As to quaternary structure, cpcE and CpcF associate to form a lyase.

Its function is as follows. Required for the chromophorylation of the CpcA gene product. The protein is Phycocyanobilin lyase subunit beta (cpcF) of Nostoc sp. (strain PCC 7120 / SAG 25.82 / UTEX 2576).